Reading from the N-terminus, the 555-residue chain is CTP synthase (555 aa).

Residues 1-267 (MAKFVFVTGG…CKEVLDCLDL (267 aa)) are amidoligase domain. CTP is bound at residue S13. S13 contacts UTP. Residues 14–19 (SIGKGI) and D71 each bind ATP. Residues D71 and E141 each contribute to the Mg(2+) site. CTP-binding positions include 148 to 150 (DIE), 188 to 193 (KTKPTQ), and K224. Residues 188–193 (KTKPTQ) and K224 contribute to the UTP site. One can recognise a Glutamine amidotransferase type-1 domain in the interval 292–534 (KVALVGKYVQ…IQAAQIRVPS (243 aa)). G354 serves as a coordination point for L-glutamine. Catalysis depends on C381, which acts as the Nucleophile; for glutamine hydrolysis. Residues 382–385 (LGMQ), E405, and R462 each bind L-glutamine. Residues H507 and E509 contribute to the active site. Positions 536-555 (PSEAFNPQSKIIEKKSLEQQ) are disordered. Basic and acidic residues predominate over residues 546-555 (IIEKKSLEQQ).

Belongs to the CTP synthase family. As to quaternary structure, homotetramer.

The enzyme catalyses UTP + L-glutamine + ATP + H2O = CTP + L-glutamate + ADP + phosphate + 2 H(+). It carries out the reaction L-glutamine + H2O = L-glutamate + NH4(+). The catalysed reaction is UTP + NH4(+) + ATP = CTP + ADP + phosphate + 2 H(+). It functions in the pathway pyrimidine metabolism; CTP biosynthesis via de novo pathway; CTP from UDP: step 2/2. Its activity is regulated as follows. Allosterically activated by GTP, when glutamine is the substrate; GTP has no effect on the reaction when ammonia is the substrate. The allosteric effector GTP functions by stabilizing the protein conformation that binds the tetrahedral intermediate(s) formed during glutamine hydrolysis. Inhibited by the product CTP, via allosteric rather than competitive inhibition. In terms of biological role, catalyzes the ATP-dependent amination of UTP to CTP with either L-glutamine or ammonia as the source of nitrogen. Regulates intracellular CTP levels through interactions with the four ribonucleotide triphosphates. In Prochlorococcus marinus (strain NATL1A), this protein is CTP synthase.